Consider the following 360-residue polypeptide: Transcriptional coactivator MYCFIDRAFT_190109 (360 aa).

The HTH iclR-type domain maps to 3 to 67 (GMALNQLLAC…GFLHEPRPGQ (65 aa)). The H-T-H motif DNA-binding region spans 33-52 (ARDVADLTGVPETQLCRVVR).

The protein resides in the nucleus. Functionally, transcriptional coactivator; part of the gene cluster that mediates the biosynthesis of an emodin derivative that may be involved in black Sigatoka disease of banana. With MYCFIDRAFT_198930, coregulates the production of the PKS8-1 cluster product. This is Transcriptional coactivator MYCFIDRAFT_190109 from Pseudocercospora fijiensis (strain CIRAD86) (Black leaf streak disease fungus).